The sequence spans 591 residues: Metastasis-associated protein MTA3 (591 aa).

In terms of domain architecture, BAH spans 1–147 (MAANMYRVGD…PSVKTLLADK (147 aa)). The ELM2 domain occupies 148-258 (GEIRVGPKYQ…SAISVLVPLG (111 aa)). Positions 265–317 (DEMEEWSASEACLFEEALEKYGKDFNDIRQDFLPWKSLTSIIEYYYMWKTTDR) constitute an SANT domain. Residues 377 to 404 (CESCYATQSHQWYSWGPPNMQCRLCATC) form a GATA-type; atypical zinc finger. The disordered stretch occupies residues 417–456 (PTQSDEEKSPSPTAEDPRARSHMSRQALQGMPVRNTGSPK). Positions 421 to 435 (DEEKSPSPTAEDPRA) are enriched in basic and acidic residues. Phosphoserine is present on residues serine 425 and serine 427. The residue at position 452 (threonine 452) is a Phosphothreonine. Serine 516 bears the Phosphoserine mark.

The protein belongs to the metastasis-associated protein family. As to quaternary structure, component of the nucleosome remodeling and deacetylase (NuRD) repressor complex, composed of core proteins MTA1, MTA2, MTA3, RBBP4, RBBP7, HDAC1, HDAC2, MBD2, MBD3, and peripherally associated proteins CDK2AP1, CDK2AP2, GATAD2A, GATAD2B, CHD3, CHD4 and CHD5. The exact stoichiometry of the NuRD complex is unknown, and some subunits such as MBD2 and MBD3, GATAD2A and GATAD2B, and CHD3, CHD4 and CHD5 define mutually exclusive NuRD complexes. Interacts with BCL6. Interacts with NACC2. Interacts with PWWP2B. In terms of tissue distribution, expressed in heart, brain, spleen, lung, liver and kidney.

Its subcellular location is the nucleus. The protein localises to the cytoplasm. Functionally, acts as a component of the histone deacetylase NuRD complex which participates in the remodeling of chromatin. Plays a role in maintenance of the normal epithelial architecture through the repression of SNAI1 transcription in a histone deacetylase-dependent manner, and thus the regulation of E-cadherin levels. Contributes to transcriptional repression by BCL6. The protein is Metastasis-associated protein MTA3 (Mta3) of Mus musculus (Mouse).